A 488-amino-acid chain; its full sequence is 3-octaprenyl-4-hydroxybenzoate carboxy-lyase (488 aa).

Asparagine 172 lines the Mn(2+) pocket. Prenylated FMN contacts are provided by residues 175 to 177, 189 to 191, and 194 to 195; these read IYR, RWL, and RG. Mn(2+) is bound at residue glutamate 238. Aspartate 287 serves as the catalytic Proton donor.

It belongs to the UbiD family. In terms of assembly, homohexamer. Prenylated FMN is required as a cofactor. It depends on Mn(2+) as a cofactor.

It localises to the cell membrane. The enzyme catalyses a 4-hydroxy-3-(all-trans-polyprenyl)benzoate + H(+) = a 2-(all-trans-polyprenyl)phenol + CO2. It participates in cofactor biosynthesis; ubiquinone biosynthesis. Its function is as follows. Catalyzes the decarboxylation of 3-octaprenyl-4-hydroxy benzoate to 2-octaprenylphenol, an intermediate step in ubiquinone biosynthesis. This Pseudomonas aeruginosa (strain LESB58) protein is 3-octaprenyl-4-hydroxybenzoate carboxy-lyase.